An 803-amino-acid chain; its full sequence is Carbon monoxide dehydrogenase large chain (803 aa).

Position 384 is a 4-hydroxyarginine (Arg384). Cys385 contributes to the Cu(+) binding site. Glu757 contributes to the Mo-molybdopterin cytosine dinucleotide binding site.

Dimer of heterotrimers. Each heterotrimer consists of a large, a medium and a small subunit. It depends on Cu(+) as a cofactor. Requires Mo-molybdopterin cytosine dinucleotide as cofactor.

It carries out the reaction CO + a quinone + H2O = a quinol + CO2. Catalyzes the oxidation of carbon monoxide to carbon dioxide. This Hydrogenophaga pseudoflava (Pseudomonas carboxydoflava) protein is Carbon monoxide dehydrogenase large chain (cutL).